A 661-amino-acid polypeptide reads, in one-letter code: Transketolase (661 aa).

Residue His30 coordinates substrate. Residues His70 and 118-120 contribute to the thiamine diphosphate site; that span reads GPL. The tract at residues 99–118 is disordered; it reads STTPGHPEFRDTPGVEATTG. Asp159 contacts Mg(2+). Thiamine diphosphate is bound by residues Gly160 and Asn189. The Mg(2+) site is built by Asn189 and Val191. Positions 266, 357, and 384 each coordinate substrate. A thiamine diphosphate-binding site is contributed by His266. The Proton donor role is filled by Glu411. Position 437 (Phe437) interacts with thiamine diphosphate. Substrate contacts are provided by His461, Asp469, and Arg520.

It belongs to the transketolase family. Homodimer. It depends on Mg(2+) as a cofactor. The cofactor is Ca(2+). Requires Mn(2+) as cofactor. Co(2+) is required as a cofactor. Thiamine diphosphate serves as cofactor.

The catalysed reaction is D-sedoheptulose 7-phosphate + D-glyceraldehyde 3-phosphate = aldehydo-D-ribose 5-phosphate + D-xylulose 5-phosphate. Its function is as follows. Catalyzes the transfer of a two-carbon ketol group from a ketose donor to an aldose acceptor, via a covalent intermediate with the cofactor thiamine pyrophosphate. The protein is Transketolase (tkt) of Physarum polycephalum (Slime mold).